Reading from the N-terminus, the 300-residue chain is MKFKMKVVTQGILLCIFSQCLFGILYLFSIWLQPLSGTDVFAWRMLTMIFGLLLILFPTIGCRSLLSLITTTLGKSWTRWVLFLLGTLDAGSQFWLFMWAPLNGEGINIAMGYFLFPLIMAVLGWAWLKERLSFIQKIALLLAAAGVAHELWHTQSFSWTSLWVCTVYPFYYLSRKWMKIPALQGITLDIILISIPCFIYILSQSDTLSLVTQEYRYWLLLPALGIVSAISLSANLKSSQQIPVSIFAVLSYIEPILLFLIAVFVLDNQITTSDYFTYVPIWLSLIVIGIEGLLNKKKVR.

A run of 8 helical transmembrane segments spans residues 13-35 (LLCI…LQPL), 45-67 (MLTM…SLLS), 80-102 (WVLF…WAPL), 106-128 (GINI…WAWL), 180-202 (IPAL…IYIL), 217-236 (YWLL…SANL), 243-265 (PVSI…AVFV), and 275-294 (YFTY…EGLL).

Belongs to the EamA transporter family.

It is found in the cell membrane. This is an uncharacterized protein from Haemophilus influenzae (strain ATCC 51907 / DSM 11121 / KW20 / Rd).